Consider the following 185-residue polypeptide: Elongation factor P (185 aa).

This sequence belongs to the elongation factor P family.

The protein resides in the cytoplasm. Its pathway is protein biosynthesis; polypeptide chain elongation. Involved in peptide bond synthesis. Stimulates efficient translation and peptide-bond synthesis on native or reconstituted 70S ribosomes in vitro. Probably functions indirectly by altering the affinity of the ribosome for aminoacyl-tRNA, thus increasing their reactivity as acceptors for peptidyl transferase. This Fervidobacterium nodosum (strain ATCC 35602 / DSM 5306 / Rt17-B1) protein is Elongation factor P.